A 447-amino-acid chain; its full sequence is tRNA-2-methylthio-N(6)-dimethylallyladenosine synthase (447 aa).

One can recognise an MTTase N-terminal domain in the interval 8–126 (KKVVTLAYGC…FQRLLEEAEE (119 aa)). Positions 17, 53, 87, 162, 166, and 169 each coordinate [4Fe-4S] cluster. A Radical SAM core domain is found at 148-378 (AKGKLKAYVN…ITVQNAQSLA (231 aa)). Positions 381 to 444 (QEMIGKTCEV…SWTLFGECRA (64 aa)) constitute a TRAM domain.

This sequence belongs to the methylthiotransferase family. MiaB subfamily. As to quaternary structure, monomer. It depends on [4Fe-4S] cluster as a cofactor.

The protein resides in the cytoplasm. The enzyme catalyses N(6)-dimethylallyladenosine(37) in tRNA + (sulfur carrier)-SH + AH2 + 2 S-adenosyl-L-methionine = 2-methylsulfanyl-N(6)-dimethylallyladenosine(37) in tRNA + (sulfur carrier)-H + 5'-deoxyadenosine + L-methionine + A + S-adenosyl-L-homocysteine + 2 H(+). Functionally, catalyzes the methylthiolation of N6-(dimethylallyl)adenosine (i(6)A), leading to the formation of 2-methylthio-N6-(dimethylallyl)adenosine (ms(2)i(6)A) at position 37 in tRNAs that read codons beginning with uridine. In Desulfitobacterium hafniense (strain Y51), this protein is tRNA-2-methylthio-N(6)-dimethylallyladenosine synthase.